The sequence spans 354 residues: Holliday junction branch migration complex subunit RuvB (354 aa).

The interval 4–191 is large ATPase domain (RuvB-L); that stretch reads TDKLAAPARV…FGIVARLEFY (188 aa). ATP contacts are provided by residues Leu30, Arg31, Gly72, Lys75, Thr76, Thr77, 138-140, Arg181, Tyr191, and Arg228; that span reads EDY. Residue Thr76 coordinates Mg(2+). The segment at 192 to 262 is small ATPAse domain (RuvB-S); sequence TAEELARIVT…MADAALAMLD (71 aa). A head domain (RuvB-H) region spans residues 265 to 354; that stretch reads RVGFDLMDRK…GDAGELFGDA (90 aa). Positions 301, 320, and 325 each coordinate DNA.

The protein belongs to the RuvB family. In terms of assembly, homohexamer. Forms an RuvA(8)-RuvB(12)-Holliday junction (HJ) complex. HJ DNA is sandwiched between 2 RuvA tetramers; dsDNA enters through RuvA and exits via RuvB. An RuvB hexamer assembles on each DNA strand where it exits the tetramer. Each RuvB hexamer is contacted by two RuvA subunits (via domain III) on 2 adjacent RuvB subunits; this complex drives branch migration. In the full resolvosome a probable DNA-RuvA(4)-RuvB(12)-RuvC(2) complex forms which resolves the HJ.

It localises to the cytoplasm. The catalysed reaction is ATP + H2O = ADP + phosphate + H(+). Its function is as follows. The RuvA-RuvB-RuvC complex processes Holliday junction (HJ) DNA during genetic recombination and DNA repair, while the RuvA-RuvB complex plays an important role in the rescue of blocked DNA replication forks via replication fork reversal (RFR). RuvA specifically binds to HJ cruciform DNA, conferring on it an open structure. The RuvB hexamer acts as an ATP-dependent pump, pulling dsDNA into and through the RuvAB complex. RuvB forms 2 homohexamers on either side of HJ DNA bound by 1 or 2 RuvA tetramers; 4 subunits per hexamer contact DNA at a time. Coordinated motions by a converter formed by DNA-disengaged RuvB subunits stimulates ATP hydrolysis and nucleotide exchange. Immobilization of the converter enables RuvB to convert the ATP-contained energy into a lever motion, pulling 2 nucleotides of DNA out of the RuvA tetramer per ATP hydrolyzed, thus driving DNA branch migration. The RuvB motors rotate together with the DNA substrate, which together with the progressing nucleotide cycle form the mechanistic basis for DNA recombination by continuous HJ branch migration. Branch migration allows RuvC to scan DNA until it finds its consensus sequence, where it cleaves and resolves cruciform DNA. The polypeptide is Holliday junction branch migration complex subunit RuvB (Cupriavidus taiwanensis (strain DSM 17343 / BCRC 17206 / CCUG 44338 / CIP 107171 / LMG 19424 / R1) (Ralstonia taiwanensis (strain LMG 19424))).